The primary structure comprises 384 residues: F-box A protein 224 (384 aa).

Residues 71-122 (PKSLSDFPIGVMYDVLGHVDPFERLVLRKVSRNLRDVVQKMRCELDALYVNK) enclose the F-box domain.

Belongs to the FTH family.

The polypeptide is F-box A protein 224 (fbxa-224) (Caenorhabditis elegans).